Reading from the N-terminus, the 203-residue chain is IMP cyclohydrolase (203 aa).

It belongs to the archaeal IMP cyclohydrolase family.

It carries out the reaction IMP + H2O = 5-formamido-1-(5-phospho-D-ribosyl)imidazole-4-carboxamide. It participates in purine metabolism; IMP biosynthesis via de novo pathway; IMP from 5-formamido-1-(5-phospho-D-ribosyl)imidazole-4-carboxamide: step 1/1. Functionally, catalyzes the cyclization of 5-formylamidoimidazole-4-carboxamide ribonucleotide to IMP. The polypeptide is IMP cyclohydrolase (Methanococcus aeolicus (strain ATCC BAA-1280 / DSM 17508 / OCM 812 / Nankai-3)).